The chain runs to 158 residues: Urease accessory protein UreE (158 aa).

The protein belongs to the UreE family.

The protein localises to the cytoplasm. Its function is as follows. Involved in urease metallocenter assembly. Binds nickel. Probably functions as a nickel donor during metallocenter assembly. This is Urease accessory protein UreE from Klebsiella pneumoniae subsp. pneumoniae (strain ATCC 700721 / MGH 78578).